The following is a 400-amino-acid chain: MDSCGLIVEYNPFHNGHQYHINQARNVSNSTCIIAIMSGNFLQRGEPAIIDKFHRTKAALHGGADIVIELPYTFAVQNSDRFANGAIQTLNKFGVSSVCFGSESGSMDPFFQAYKTIKNSSEAFDNLLKDNLSDGLSFPDAATAVYETLGLTEGNLDLSKPNNILGFSYVKAIQEYAPTIKPLTIQRKNNDFHDESINGSIASATSIRKQILQSDSMDDDVHNAIPIETLHQLQSYKDKTAIWHDFEQYFPLLRYRVLTMSIKELQNIQGVVEGLEYRIQQTASDALSFVDWMHKIKTKRYTWTRIQRIFIHILTNTKKDENYVDESPSYIRILGMNKQGQQYLNYHKKNFDVPIITSIANTTHSMLAIEERATKAYYSIIPAKLQRKMFKQELQGPIII.

Residues I7–H20, G101, N162, and R187 contribute to the ATP site.

This sequence belongs to the TmcAL family.

Its subcellular location is the cytoplasm. The catalysed reaction is cytidine(34) in elongator tRNA(Met) + acetate + ATP = N(4)-acetylcytidine(34) in elongator tRNA(Met) + AMP + diphosphate. In terms of biological role, catalyzes the formation of N(4)-acetylcytidine (ac(4)C) at the wobble position of elongator tRNA(Met), using acetate and ATP as substrates. First activates an acetate ion to form acetyladenylate (Ac-AMP) and then transfers the acetyl group to tRNA to form ac(4)C34. The polypeptide is tRNA(Met) cytidine acetate ligase (Oceanobacillus iheyensis (strain DSM 14371 / CIP 107618 / JCM 11309 / KCTC 3954 / HTE831)).